We begin with the raw amino-acid sequence, 22 residues long: FVPFFTQSDIQKMQEKERNKGQ.

Residues 1-11 show a composition bias toward polar residues; it reads FVPFFTQSDIQ. Residues 1–22 form a disordered region; that stretch reads FVPFFTQSDIQKMQEKERNKGQ. A compositionally biased stretch (basic and acidic residues) spans 12 to 22; it reads KMQEKERNKGQ.

This sequence belongs to the motilin family.

It is found in the secreted. Functionally, plays an important role in the regulation of interdigestive gastrointestinal motility and indirectly causes rhythmic contraction of duodenal and colonic smooth muscle. In Gallus gallus (Chicken), this protein is Motilin (MLN).